The following is a 138-amino-acid chain: Small ribosomal subunit protein uS11c (138 aa).

The tract at residues 1–22 is disordered; that stretch reads MAKSIPRISSRRNGPIGSGKTV.

This sequence belongs to the universal ribosomal protein uS11 family. In terms of assembly, part of the 30S ribosomal subunit.

It is found in the plastid. The sequence is that of Small ribosomal subunit protein uS11c from Cuscuta exaltata (Tall dodder).